Reading from the N-terminus, the 126-residue chain is Aspartate 1-decarboxylase (126 aa).

The active-site Schiff-base intermediate with substrate; via pyruvic acid is S25. S25 is modified (pyruvic acid (Ser)). A substrate-binding site is contributed by T57. The active-site Proton donor is Y58. Residue 73–75 (GSA) participates in substrate binding.

The protein belongs to the PanD family. As to quaternary structure, heterooctamer of four alpha and four beta subunits. It depends on pyruvate as a cofactor. In terms of processing, is synthesized initially as an inactive proenzyme, which is activated by self-cleavage at a specific serine bond to produce a beta-subunit with a hydroxyl group at its C-terminus and an alpha-subunit with a pyruvoyl group at its N-terminus.

The protein localises to the cytoplasm. It carries out the reaction L-aspartate + H(+) = beta-alanine + CO2. It functions in the pathway cofactor biosynthesis; (R)-pantothenate biosynthesis; beta-alanine from L-aspartate: step 1/1. Catalyzes the pyruvoyl-dependent decarboxylation of aspartate to produce beta-alanine. The protein is Aspartate 1-decarboxylase of Chromobacterium violaceum (strain ATCC 12472 / DSM 30191 / JCM 1249 / CCUG 213 / NBRC 12614 / NCIMB 9131 / NCTC 9757 / MK).